A 330-amino-acid chain; its full sequence is Ferredoxin--NADP reductase (330 aa).

Residues Glu35, Gln43, Tyr48, Val90, Phe123, Asp285, and Thr326 each coordinate FAD.

This sequence belongs to the ferredoxin--NADP reductase type 2 family. In terms of assembly, homodimer. Requires FAD as cofactor.

It catalyses the reaction 2 reduced [2Fe-2S]-[ferredoxin] + NADP(+) + H(+) = 2 oxidized [2Fe-2S]-[ferredoxin] + NADPH. The polypeptide is Ferredoxin--NADP reductase (Streptococcus equi subsp. zooepidemicus (strain MGCS10565)).